The chain runs to 306 residues: Polyadenylate-binding protein 2 (306 aa).

The span at 1 to 12 (MAAAAAAAAAAG) shows a compositional bias: low complexity. A disordered region spans residues 1–115 (MAAAAAAAAA…EGDPGDGAIE (115 aa)). Position 2 is an N-acetylalanine (Ala2). Positions 2 to 145 (AAAAAAAAAA…LKELQNEVEK (144 aa)) are interaction with SKIP. Arg17 is subject to Omega-N-methylarginine. Ser19 bears the Phosphoserine mark. Residues 30–47 (GAGGEAGEGAPGGAGDYG) show a composition bias toward gly residues. The segment covering 51–72 (ESEELEPEELLLEPEPEPEPEE) has biased composition (acidic residues). Ser52 bears the Phosphoserine mark. Over residues 77–87 (PRAPPGAPGPG) the composition is skewed to pro residues. A coiled-coil region spans residues 115 to 151 (EDPELEAIKARVREMEEEAEKLKELQNEVEKQMNMSP). Residues 119–147 (LEAIKARVREMEEEAEKLKELQNEVEKQM) form a stimulates PAPOLA region. Residues Ser150 and Ser235 each carry the phosphoserine modification. The necessary for homooligomerization stretch occupies residues 155–306 (NAGPVIMSIE…ARATSWYSPY (152 aa)). The 78-residue stretch at 172-249 (RSIYVGNVDY…RQIKVIPKRT (78 aa)) folds into the RRM domain. 3 positions are modified to asymmetric dimethylarginine; alternate: Arg238, Arg259, and Arg263. Arg238, Arg259, and Arg263 each carry omega-N-methylarginine; alternate. An asymmetric dimethylarginine mark is found at Arg265, Arg267, Arg269, Arg277, Arg279, Arg287, Arg289, Arg291, Arg294, Arg296, and Arg298. An interaction with PAPOLA region spans residues 286 to 306 (SRPRGRVYRGRARATSWYSPY).

In terms of assembly, monomer and homooligomer. Binds RNA as a monomer and oligomerizes when bound to poly(A). Associates in a ternary complex with CPSF4 and NS/NS1 and interaction with NS/NS1, blocks nuclear export of host cell mRNAs. Associates in a single complex with SKIP and MYOD1 and interacts with SKIP in differentiated myocytes. Interacts with NUDT21/CPSF5. Identified in a IGF2BP1-dependent mRNP granule complex containing untranslated mRNAs. Interacts with PAPOLA, but only in presence of oligo(A) RNA. Interacts with transportin. May interact with SETX. Interacts (via RRM domain and C-terminal arginine-rich region) with ZFP36 (via hypophosphorylated form); this interaction occurs in the nucleus in a RNA-independent manner, decreases in presence of single-stranded poly(A) RNA-oligomer and in a p38-dependent-manner and may down-regulated RNA poly(A) polymerase activity. Component of the poly(A) tail exosome targeting (PAXT) complex composed of PABPN1, ZFC3H1 and MTREX. Interacts with ZFC3H1 in a RNase-insensitive manner. Interacts with FRG1. Interacts with ZC3H11A. Post-translationally, arginine dimethylation is asymmetric and involves PRMT1 and PRMT3. It does not influence the RNA binding properties. Ubiquitous.

It is found in the nucleus. The protein localises to the cytoplasm. The protein resides in the nucleus speckle. In terms of biological role, involved in the 3'-end formation of mRNA precursors (pre-mRNA) by the addition of a poly(A) tail of 200-250 nt to the upstream cleavage product. Stimulates poly(A) polymerase (PAPOLA) conferring processivity on the poly(A) tail elongation reaction and also controls the poly(A) tail length. Increases the affinity of poly(A) polymerase for RNA. Is also present at various stages of mRNA metabolism including nucleocytoplasmic trafficking and nonsense-mediated decay (NMD) of mRNA. Cooperates with SKIP to synergistically activate E-box-mediated transcription through MYOD1 and may regulate the expression of muscle-specific genes. Binds to poly(A) and to poly(G) with high affinity. May protect the poly(A) tail from degradation. Subunit of the trimeric poly(A) tail exosome targeting (PAXT) complex, a complex that directs a subset of long and polyadenylated poly(A) RNAs for exosomal degradation. The RNA exosome is fundamental for the degradation of RNA in eukaryotic nuclei. Substrate targeting is facilitated by its cofactor MTREX, which links to RNA-binding protein adapters. The chain is Polyadenylate-binding protein 2 (PABPN1) from Bos taurus (Bovine).